Consider the following 213-residue polypeptide: Ras-related protein RabK1 (213 aa).

14 to 21 (GDRMVGKL) is a GTP binding site. Positions 36–43 (GNSIPFDF) match the Effector region motif. Residues 61–65 (NTHGS) and 119–122 (TKSD) each bind GTP.

The protein belongs to the small GTPase superfamily. Rab family.

The polypeptide is Ras-related protein RabK1 (rabK1) (Dictyostelium discoideum (Social amoeba)).